Consider the following 483-residue polypeptide: MTRAKPEDDEYWNSSKFKAFTFDDEDDEFSRLKESKRAVNSILVDDDDDEDDVEKVSWSGEPVGSISWSVRETASSIRSGSEQNFPKIDTAPSLSKQGSGYSLSSLFKAKSKPTAFQSFSESFSETSARTYAPELRKPKSDGKDFVSDLSPEETIRRMQKGRAFSMEKFRSLQDKLLLLDEAVSVYDGNVITAVLIYLKKSLSKEILFRELMPREVALRHYIHYLKEMGEQKLLVELLKALGRTEDMALMQYKEHLNIKDEGRRRDFLKSCLSLPFSQDDSTHVQDHYTLLERQIIIEASDKKADTDIFKKFPRKASILNMPIITTLYYSCFYHYGEPEGTFSSPSNIRKTFRISEKQYITTALGARAKLKSWFDVDSLFNTKNWLGYTKKRSPIAFHRVVDILQKNSAPVQVLQEYVNLIDDPELKLSVALKYKCHDIIINTYRDLKDRQQLIVYREKLERDSPEYRKIQELLNNGQIRWKN.

The protein belongs to the SPE39 family. Interacts with vps33b. As to expression, high levels detected in liver and small intestine of larvae at 5 days post-fertilization.

It localises to the cytoplasm. It is found in the cytoplasmic vesicle. The protein localises to the early endosome. Its subcellular location is the recycling endosome. The protein resides in the late endosome. In terms of biological role, proposed to be involved in endosomal maturation implicating in part vps33b. In epithelial cells, the vps33b:vipas39 complex may play a role in the apical rab11a-dependent recycling pathway and in the maintenance of the apical-basolateral polarity. May play a role in lysosomal trafficking, probably via association with the core HOPS complex in a discrete population of endosomes; the functions seems to be independent of vps33b. May play a role in vesicular trafficking during spermatogenesis. May be involved in direct or indirect transcriptional regulation of E-cadherin. The chain is Spermatogenesis-defective protein 39 homolog (vipas39) from Danio rerio (Zebrafish).